The following is a 245-amino-acid chain: DNA repair protein RecO (245 aa).

It belongs to the RecO family.

Functionally, involved in DNA repair and RecF pathway recombination. The sequence is that of DNA repair protein RecO from Klebsiella pneumoniae (strain 342).